The primary structure comprises 362 residues: Chorismate synthase (362 aa).

An NADP(+)-binding site is contributed by Arg46. FMN contacts are provided by residues 122–124 (RSS), 238–239 (NA), Gly278, 293–297 (KPTPS), and Arg319.

It belongs to the chorismate synthase family. As to quaternary structure, homotetramer. FMNH2 serves as cofactor.

It carries out the reaction 5-O-(1-carboxyvinyl)-3-phosphoshikimate = chorismate + phosphate. It participates in metabolic intermediate biosynthesis; chorismate biosynthesis; chorismate from D-erythrose 4-phosphate and phosphoenolpyruvate: step 7/7. In terms of biological role, catalyzes the anti-1,4-elimination of the C-3 phosphate and the C-6 proR hydrogen from 5-enolpyruvylshikimate-3-phosphate (EPSP) to yield chorismate, which is the branch point compound that serves as the starting substrate for the three terminal pathways of aromatic amino acid biosynthesis. This reaction introduces a second double bond into the aromatic ring system. This chain is Chorismate synthase, found in Campylobacter jejuni subsp. doylei (strain ATCC BAA-1458 / RM4099 / 269.97).